Here is a 353-residue protein sequence, read N- to C-terminus: Aromatic amino acid aminotransferase (353 aa).

At K217 the chain carries N6-(pyridoxal phosphate)lysine.

This sequence belongs to the class-II pyridoxal-phosphate-dependent aminotransferase family. As to quaternary structure, homodimer. Pyridoxal 5'-phosphate serves as cofactor.

The catalysed reaction is an aromatic L-alpha-amino acid + 2-oxoglutarate = an aromatic oxo-acid + L-glutamate. Its function is as follows. Aminotransferase that catalyzes the conversion of aromatic amino acids and 2-oxoglutarate into corresponding aromatic oxo acids and L-glutamate. This chain is Aromatic amino acid aminotransferase, found in Mycobacterium bovis (strain ATCC BAA-935 / AF2122/97).